A 2395-amino-acid polypeptide reads, in one-letter code: Centrosomal protein of 295 kDa (2395 aa).

The interval 1 to 540 (MKRKVMNGKL…KQADHLEVRP (540 aa)) is necessary for centriole targeting and microtubule association. Phosphoserine is present on S13. Coiled-coil stretches lie at residues 53-84 (QRRN…LEKL), 114-148 (AERK…HIKA), 209-277 (DAHL…KRQT), 488-538 (ARHK…HLEV), and 567-592 (QQNR…VLKE). 3 disordered regions span residues 602–643 (LIPD…PVQP), 660–681 (GHIP…SQER), and 735–764 (SDSQ…LMPE). S634 carries the post-translational modification Phosphoserine. Residues 735 to 750 (SDSQQISSEDSENISS) show a composition bias toward low complexity. Residues 817 to 848 (GQLELQKKVLQERQEAQEKLLSCTQKELEEQT) are a coiled coil. 3 disordered regions span residues 864–893 (SLPS…SMDN), 966–986 (ADTQ…KGLL), and 1212–1272 (VDPE…SKVT). The span at 1219–1250 (FQFSPQTQENRSSQQTGFSSFTPSLRQPSCVS) shows a compositional bias: polar residues. A coiled-coil region spans residues 1444–1488 (HDDLQALQQQLDVHREAIRSCQDIQEELLLQRLNKLEQRVSSKQI). Position 1565 is a phosphoserine (S1565). Residues 1677–1692 (PWGDSSQGSSSGDQPG) are compositionally biased toward low complexity. 5 disordered regions span residues 1677 to 1715 (PWGD…RASK), 1819 to 1845 (SEEE…ETQE), 1875 to 1899 (ESFS…GSLS), 1989 to 2013 (DLSS…SSEK), and 2354 to 2395 (NKTP…SQCI). The span at 1697–1710 (HAEHSGESLGKELS) shows a compositional bias: basic and acidic residues. A compositionally biased stretch (basic and acidic residues) spans 1880-1894 (QTEHQEQESSSKEEE). The ALMS motif stretch occupies residues 2329–2395 (SLGEAFMKRK…TAKRNRSQCI (67 aa)). Over residues 2376 to 2388 (HLKEAVSGDETAK) the composition is skewed to basic and acidic residues.

In terms of assembly, interacts (via ALMS motif) with microtubules; this interaction is direct.

The protein resides in the cytoplasm. It localises to the cytoskeleton. Its subcellular location is the microtubule organizing center. The protein localises to the centrosome. It is found in the centriole. The protein resides in the spindle. In terms of biological role, centriole-enriched microtubule-binding protein involved in centriole biogenesis. Essential for the generation of the distal portion of new-born centrioles in a CPAP- and CEP120-mediated elongation dependent manner during the cell cycle S/G2 phase after formation of the initiating cartwheel structure. Required for the recruitment of centriolar proteins, such as POC1B, POC5 and CEP135, into the distal portion of centrioles. Also required for centriole-to-centrosome conversion during mitotic progression, but is dispensable for cartwheel removal or centriole disengagement. Binds to and stabilizes centriolar microtubule. May be involved in ciliogenesis. This chain is Centrosomal protein of 295 kDa, found in Rattus norvegicus (Rat).